The primary structure comprises 116 residues: Large ribosomal subunit protein eL22B (116 aa).

The protein belongs to the eukaryotic ribosomal protein eL22 family.

In Dictyostelium discoideum (Social amoeba), this protein is Large ribosomal subunit protein eL22B (rpl22a).